The following is a 630-amino-acid chain: GTPase-activating protein NEL1 (630 aa).

This sequence belongs to the SEC23/SEC24 family. SEC23 subfamily.

The protein resides in the cytoplasm. The protein localises to the nucleus. Acts as a GTPase-activating protein (GAP) for SAR1. Contrary to its SEC23 homolog, NEL1 does not associate with SEC24 and its homologs, nor does it associate with the COPII components, suggesting that it is unlikely that NEL1 functions as a structural component of the vesicle coat machinery. May function as a signaling molecule. The sequence is that of GTPase-activating protein NEL1 from Saccharomyces cerevisiae (strain ATCC 204508 / S288c) (Baker's yeast).